Consider the following 180-residue polypeptide: NAD(P)H-quinone oxidoreductase subunit I, chloroplastic (180 aa).

2 consecutive 4Fe-4S ferredoxin-type domains span residues 55–84 (GRIH…VDWR) and 95–124 (LNYS…MTEE). [4Fe-4S] cluster is bound by residues Cys64, Cys67, Cys70, Cys74, Cys104, Cys107, Cys110, and Cys114.

This sequence belongs to the complex I 23 kDa subunit family. As to quaternary structure, NDH is composed of at least 16 different subunits, 5 of which are encoded in the nucleus. It depends on [4Fe-4S] cluster as a cofactor.

The protein resides in the plastid. It localises to the chloroplast thylakoid membrane. The catalysed reaction is a plastoquinone + NADH + (n+1) H(+)(in) = a plastoquinol + NAD(+) + n H(+)(out). The enzyme catalyses a plastoquinone + NADPH + (n+1) H(+)(in) = a plastoquinol + NADP(+) + n H(+)(out). NDH shuttles electrons from NAD(P)H:plastoquinone, via FMN and iron-sulfur (Fe-S) centers, to quinones in the photosynthetic chain and possibly in a chloroplast respiratory chain. The immediate electron acceptor for the enzyme in this species is believed to be plastoquinone. Couples the redox reaction to proton translocation, and thus conserves the redox energy in a proton gradient. This Drimys granadensis protein is NAD(P)H-quinone oxidoreductase subunit I, chloroplastic.